The chain runs to 202 residues: Flagellar transcriptional regulator FlhC (202 aa).

Residues Cys137, Cys140, Cys157, and Cys160 each contribute to the Zn(2+) site.

This sequence belongs to the FlhC family. Heterohexamer composed of two FlhC and four FlhD subunits. Each FlhC binds a FlhD dimer, forming a heterotrimer, and a hexamer assembles by dimerization of two heterotrimers. It depends on Zn(2+) as a cofactor.

It localises to the cytoplasm. In terms of biological role, functions in complex with FlhD as a master transcriptional regulator that regulates transcription of several flagellar and non-flagellar operons by binding to their promoter region. Activates expression of class 2 flagellar genes, including fliA, which is a flagellum-specific sigma factor that turns on the class 3 genes. Also regulates genes whose products function in a variety of physiological pathways. The polypeptide is Flagellar transcriptional regulator FlhC (Variovorax paradoxus (strain S110)).